Consider the following 231-residue polypeptide: Nuclear transcription factor Y subunit C-9 (231 aa).

A disordered region spans residues 211–231; the sequence is NPYMGQPMWQQQAPDQPDQEN.

Belongs to the NFYC/HAP5 subunit family. Heterotrimeric transcription factor composed of three components, NF-YA, NF-YB and NF-YC. Interacts with NFYA2, NFYB2, CO and RGA. Interacts with REF6 (via N-terminus). As to expression, ubiquitous. Present in etiolated seedlings.

It localises to the nucleus. Functionally, stimulates the transcription of various genes by recognizing and binding to a CCAAT motif in promoters. Interacts with REF6 to directly regulate SOC1 transcription in response to flowering signals from photoperiod and gibberellic acid pathways. The sequence is that of Nuclear transcription factor Y subunit C-9 (NFYC9) from Arabidopsis thaliana (Mouse-ear cress).